Consider the following 277-residue polypeptide: Chitosanase (277 aa).

The signal sequence occupies residues Met1–Ala35. The Proton donor role is filled by Glu54. Asp70 serves as the catalytic Nucleophile.

The protein belongs to the glycosyl hydrolase 46 family.

It localises to the secreted. It carries out the reaction Endohydrolysis of beta-(1-&gt;4)-linkages between D-glucosamine residues in a partly acetylated chitosan.. In terms of biological role, aids in the defense against invading fungal pathogens by degrading their cell wall chitosan. The protein is Chitosanase (csn) of Bacillus subtilis (strain 168).